The sequence spans 473 residues: uncharacterized protein (473 aa).

Positions 26–254 constitute an SET domain; sequence PKLYIASSGV…KMSEIFNSFG (229 aa).

This is an uncharacterized protein from Schizosaccharomyces pombe (strain 972 / ATCC 24843) (Fission yeast).